A 226-amino-acid chain; its full sequence is uncharacterized protein (226 aa).

The chain crosses the membrane as a helical span at residues 121–141 (YLIGNIIGLPLTIPFILIPLI).

It to yeast YDL183c.

The protein resides in the membrane. This is an uncharacterized protein from Schizosaccharomyces pombe (strain 972 / ATCC 24843) (Fission yeast).